A 132-amino-acid polypeptide reads, in one-letter code: MAKCSYVFCAVLLIFIVAIGEMEAAGSKLCEKTSKTYSGKCDNKKCDKKCIEWEKAQHGACHKREAGKESCFCYFDCSKSPPGATPAPPGAAPPPAAGGSPSPPADGGSPPPPADGGSPPVDGGSPPPPSTH.

A signal peptide spans 1 to 24 (MAKCSYVFCAVLLIFIVAIGEMEA). The defensin-like domain stretch occupies residues 28 to 77 (KLCEKTSKTYSGKCDNKKCDKKCIEWEKAQHGACHKREAGKESCFCYFDC). 4 disulfide bridges follow: cysteine 30–cysteine 77, cysteine 41–cysteine 61, cysteine 46–cysteine 71, and cysteine 50–cysteine 73. Epitope recognized by IgE antibodies of mugwort pollen-sensitized patients regions lie at residues 64-70 (REAGKES) and 79-87 (KSPPGATPA). The tract at residues 81–132 (PPGATPAPPGAAPPPAAGGSPSPPADGGSPPPPADGGSPPVDGGSPPPPSTH) is disordered. A compositionally biased stretch (pro residues) spans 83–114 (GATPAPPGAAPPPAAGGSPSPPADGGSPPPPA). A compositionally biased stretch (low complexity) spans 115–124 (DGGSPPVDGG).

This sequence in the N-terminal section; belongs to the DEFL family. In terms of processing, the mature protein extracted from the plant exhibits an average rate of 76% of hydroxyprolines. Post-translationally, O-glycosylated. O-linkage of 3 galactoses plus 9-16 or 21-23 arabinose residues attached on one or two hydroxyprolines.

The protein resides in the secreted. The protein is Major pollen allergen Art v 1 of Artemisia vulgaris (Mugwort).